A 268-amino-acid chain; its full sequence is Ribosomal RNA small subunit methyltransferase A (268 aa).

The S-adenosyl-L-methionine site is built by Asn-16, Leu-18, Gly-43, Glu-64, Asp-89, and Asn-110.

Belongs to the class I-like SAM-binding methyltransferase superfamily. rRNA adenine N(6)-methyltransferase family. RsmA subfamily.

Its subcellular location is the cytoplasm. It catalyses the reaction adenosine(1518)/adenosine(1519) in 16S rRNA + 4 S-adenosyl-L-methionine = N(6)-dimethyladenosine(1518)/N(6)-dimethyladenosine(1519) in 16S rRNA + 4 S-adenosyl-L-homocysteine + 4 H(+). Its function is as follows. Specifically dimethylates two adjacent adenosines (A1518 and A1519) in the loop of a conserved hairpin near the 3'-end of 16S rRNA in the 30S particle. May play a critical role in biogenesis of 30S subunits. The polypeptide is Ribosomal RNA small subunit methyltransferase A (Pseudomonas aeruginosa (strain ATCC 15692 / DSM 22644 / CIP 104116 / JCM 14847 / LMG 12228 / 1C / PRS 101 / PAO1)).